The primary structure comprises 101 residues: ATP-dependent Clp protease adapter protein ClpS 2 (101 aa).

The protein belongs to the ClpS family. As to quaternary structure, binds to the N-terminal domain of the chaperone ClpA.

Involved in the modulation of the specificity of the ClpAP-mediated ATP-dependent protein degradation. This is ATP-dependent Clp protease adapter protein ClpS 2 from Mesorhizobium japonicum (strain LMG 29417 / CECT 9101 / MAFF 303099) (Mesorhizobium loti (strain MAFF 303099)).